The primary structure comprises 151 residues: Large ribosomal subunit protein bL9 (151 aa).

It belongs to the bacterial ribosomal protein bL9 family.

Its function is as follows. Binds to the 23S rRNA. This chain is Large ribosomal subunit protein bL9, found in Desulfotalea psychrophila (strain LSv54 / DSM 12343).